The following is a 199-amino-acid chain: Small ribosomal subunit protein uS4 (199 aa).

An S4 RNA-binding domain is found at Ser94–Ile157.

The protein belongs to the universal ribosomal protein uS4 family. In terms of assembly, part of the 30S ribosomal subunit. Contacts protein S5. The interaction surface between S4 and S5 is involved in control of translational fidelity.

One of the primary rRNA binding proteins, it binds directly to 16S rRNA where it nucleates assembly of the body of the 30S subunit. In terms of biological role, with S5 and S12 plays an important role in translational accuracy. The sequence is that of Small ribosomal subunit protein uS4 from Mycoplasma mobile (strain ATCC 43663 / 163K / NCTC 11711) (Mesomycoplasma mobile).